The primary structure comprises 161 residues: DNA-directed RNA polymerase 18 kDa subunit (161 aa).

Belongs to the poxviridae DNA-directed RNA polymerase 18 kDa subunit family. As to quaternary structure, the DNA-dependent RNA polymerase used for intermediate and late genes expression consists of eight subunits Rpo30/OPG66, Rpo7/OPG90, Rpo22/OPG103, Rpo147/OPG105, Rpo18/OPG119, Rpo19/OPG131, Rpo132/OPG151 and Rpo35/OPG156. The same holoenzyme, with the addition of the transcription-specificity factor OPG109, is used for early gene expression. Post-translationally, apparently non-glycosylated.

The protein localises to the virion. The enzyme catalyses RNA(n) + a ribonucleoside 5'-triphosphate = RNA(n+1) + diphosphate. Part of the DNA-dependent RNA polymerase which catalyzes the transcription of viral DNA into RNA using the four ribonucleoside triphosphates as substrates. Responsible for the transcription of early, intermediate and late genes. DNA-dependent RNA polymerase associates with the early transcription factor (ETF), itself composed of OPG118 and OPG133, thereby allowing the early genes transcription. Late transcription, and probably also intermediate transcription, require newly synthesized RNA polymerase. In Cynomys gunnisoni (Gunnison's prairie dog), this protein is DNA-directed RNA polymerase 18 kDa subunit (OPG119).